The sequence spans 402 residues: Imidazolonepropionase (402 aa).

His66 and His68 together coordinate Fe(3+). Residues His66 and His68 each contribute to the Zn(2+) site. 4-imidazolone-5-propanoate-binding residues include Arg75, Tyr138, and His171. Tyr138 serves as a coordination point for N-formimidoyl-L-glutamate. A Fe(3+)-binding site is contributed by His236. His236 contacts Zn(2+). Gln239 lines the 4-imidazolone-5-propanoate pocket. Residue Asp311 coordinates Fe(3+). Asp311 contributes to the Zn(2+) binding site. N-formimidoyl-L-glutamate contacts are provided by Asn313 and Gly315. Position 316 (Thr316) interacts with 4-imidazolone-5-propanoate.

It belongs to the metallo-dependent hydrolases superfamily. HutI family. The cofactor is Zn(2+). Fe(3+) serves as cofactor.

The protein localises to the cytoplasm. The enzyme catalyses 4-imidazolone-5-propanoate + H2O = N-formimidoyl-L-glutamate. It participates in amino-acid degradation; L-histidine degradation into L-glutamate; N-formimidoyl-L-glutamate from L-histidine: step 3/3. Its function is as follows. Catalyzes the hydrolytic cleavage of the carbon-nitrogen bond in imidazolone-5-propanoate to yield N-formimidoyl-L-glutamate. It is the third step in the universal histidine degradation pathway. The protein is Imidazolonepropionase of Vibrio cholerae serotype O1 (strain ATCC 39541 / Classical Ogawa 395 / O395).